An 82-amino-acid polypeptide reads, in one-letter code: Cell division topological specificity factor (82 aa).

It belongs to the MinE family.

Prevents the cell division inhibition by proteins MinC and MinD at internal division sites while permitting inhibition at polar sites. This ensures cell division at the proper site by restricting the formation of a division septum at the midpoint of the long axis of the cell. This is Cell division topological specificity factor from Buchnera aphidicola subsp. Cinara cedri (strain Cc).